Here is a 511-residue protein sequence, read N- to C-terminus: ATP synthase subunit alpha (511 aa).

Residue 169–176 participates in ATP binding; it reads GDRQTGKT.

The protein belongs to the ATPase alpha/beta chains family. In terms of assembly, F-type ATPases have 2 components, CF(1) - the catalytic core - and CF(0) - the membrane proton channel. CF(1) has five subunits: alpha(3), beta(3), gamma(1), delta(1), epsilon(1). CF(0) has three main subunits: a(1), b(2) and c(9-12). The alpha and beta chains form an alternating ring which encloses part of the gamma chain. CF(1) is attached to CF(0) by a central stalk formed by the gamma and epsilon chains, while a peripheral stalk is formed by the delta and b chains.

It is found in the cell inner membrane. It catalyses the reaction ATP + H2O + 4 H(+)(in) = ADP + phosphate + 5 H(+)(out). Produces ATP from ADP in the presence of a proton gradient across the membrane. The alpha chain is a regulatory subunit. This is ATP synthase subunit alpha from Bartonella henselae (strain ATCC 49882 / DSM 28221 / CCUG 30454 / Houston 1) (Rochalimaea henselae).